We begin with the raw amino-acid sequence, 249 residues long: Salivary antigen-5 (249 aa).

The first 26 residues, methionine 1 to alanine 26, serve as a signal peptide directing secretion. The SCP domain maps to serine 50 to tyrosine 193. N-linked (GlcNAc...) asparagine glycans are attached at residues asparagine 57, asparagine 127, and asparagine 168.

This sequence belongs to the CRISP family. Venom allergen 5-like subfamily. In terms of assembly, monomeric in solution. Cu(2+) serves as cofactor. In terms of tissue distribution, saliva (at protein level). Salivary gland (at protein level).

It localises to the secreted. Functionally, antioxidant protein that scavenges superoxide radicals. Removes superoxide radicals produced by PMA-stimulated host neutrophils. Inhibits host platelet aggregation induced by low doses of collagen by interfering with the pro-aggregatory properties of reactive oxygen species on platelets. Binds to heparin and sulfated glycosaminoglycans. This Dipetalogaster maximus (Blood-sucking bug) protein is Salivary antigen-5.